The chain runs to 508 residues: E3 ubiquitin-protein ligase XBAT32 (508 aa).

5 ANK repeats span residues 50-79 (VRNS…DINL), 83-112 (RGQT…NIHR), 117-147 (NGGT…SVPN), 177-206 (GGIT…SVTQ), and 220-249 (AGST…CLAA). Residues 321-372 (CAVCLERKCTVAADGCAHEFCTNCALYLSTTSITSSKTSNVTPGSVPCPLCR) form an RING-type zinc finger.

As to quaternary structure, interacts with ACS4 and ACS7. In terms of tissue distribution, expressed in the vascular system of primary root, vascular tissue of leaves, stems and anthers.

It catalyses the reaction S-ubiquitinyl-[E2 ubiquitin-conjugating enzyme]-L-cysteine + [acceptor protein]-L-lysine = [E2 ubiquitin-conjugating enzyme]-L-cysteine + N(6)-ubiquitinyl-[acceptor protein]-L-lysine.. It participates in protein modification; protein ubiquitination. Its function is as follows. E3 ubiquitin-protein ligase that mediates ubiquitination of ACC synthases (ACS). Negatively regulates ethylene biosynthesis probably via ubiquitin-dependent degradation of ACS4 and ACS7 enzymes. Regulates lateral root formation and development by controlling ethylene production which inhibits lateral root formation at high concentration. This chain is E3 ubiquitin-protein ligase XBAT32 (XBAT32), found in Arabidopsis thaliana (Mouse-ear cress).